The chain runs to 245 residues: tRNA (guanine-N(1)-)-methyltransferase (245 aa).

Residues Gly114 and 134 to 139 (IGDYIL) contribute to the S-adenosyl-L-methionine site.

The protein belongs to the RNA methyltransferase TrmD family. In terms of assembly, homodimer.

The protein localises to the cytoplasm. The enzyme catalyses guanosine(37) in tRNA + S-adenosyl-L-methionine = N(1)-methylguanosine(37) in tRNA + S-adenosyl-L-homocysteine + H(+). Specifically methylates guanosine-37 in various tRNAs. This is tRNA (guanine-N(1)-)-methyltransferase from Listeria monocytogenes serotype 4b (strain CLIP80459).